Consider the following 302-residue polypeptide: Quinolinate synthase (302 aa).

Residues histidine 24 and serine 41 each coordinate iminosuccinate. Residue cysteine 86 participates in [4Fe-4S] cluster binding. Iminosuccinate is bound by residues 112–114 (YVN) and serine 129. Cysteine 173 lines the [4Fe-4S] cluster pocket. Iminosuccinate contacts are provided by residues 199–201 (HPE) and threonine 216. Cysteine 259 is a binding site for [4Fe-4S] cluster.

It belongs to the quinolinate synthase family. Type 2 subfamily. It depends on [4Fe-4S] cluster as a cofactor.

It localises to the cytoplasm. The catalysed reaction is iminosuccinate + dihydroxyacetone phosphate = quinolinate + phosphate + 2 H2O + H(+). It functions in the pathway cofactor biosynthesis; NAD(+) biosynthesis; quinolinate from iminoaspartate: step 1/1. Functionally, catalyzes the condensation of iminoaspartate with dihydroxyacetone phosphate to form quinolinate. In Thermococcus kodakarensis (strain ATCC BAA-918 / JCM 12380 / KOD1) (Pyrococcus kodakaraensis (strain KOD1)), this protein is Quinolinate synthase.